A 543-amino-acid chain; its full sequence is NXPE family member 4 (543 aa).

Residues 1–26 (MKTLASRKSLWMLLFIVIFWVSFTVF) form the signal peptide. Asn-91, Asn-159, and Asn-223 each carry an N-linked (GlcNAc...) asparagine glycan.

Belongs to the NXPE family.

The protein resides in the secreted. In Mus musculus (Mouse), this protein is NXPE family member 4 (Nxpe4).